A 141-amino-acid polypeptide reads, in one-letter code: ATP synthase epsilon chain 1 (141 aa).

Belongs to the ATPase epsilon chain family. F-type ATPases have 2 components, CF(1) - the catalytic core - and CF(0) - the membrane proton channel. CF(1) has five subunits: alpha(3), beta(3), gamma(1), delta(1), epsilon(1). CF(0) has three main subunits: a, b and c.

The protein resides in the cell inner membrane. In terms of biological role, produces ATP from ADP in the presence of a proton gradient across the membrane. The protein is ATP synthase epsilon chain 1 of Paraburkholderia xenovorans (strain LB400).